Consider the following 185-residue polypeptide: Protein-arginine kinase activator protein (185 aa).

R115 and R169 each carry phosphoarginine. Positions 139–174 (RRQIDMLKKELESLIHQEEFENAAHVRDQIRLLEQS) constitute a UVR domain.

In terms of assembly, interacts with McsB. In terms of processing, phosphorylated on Arg residues by McsB.

Functionally, activates the phosphorylation activity of the protein-arginine kinase McsB. Is required for the delocalization of competence proteins from the cell poles. This Bacillus subtilis (strain 168) protein is Protein-arginine kinase activator protein (mcsA).